Reading from the N-terminus, the 114-residue chain is Small ribosomal subunit protein bS6 (114 aa).

It belongs to the bacterial ribosomal protein bS6 family.

Its function is as follows. Binds together with bS18 to 16S ribosomal RNA. The protein is Small ribosomal subunit protein bS6 of Bacteroides thetaiotaomicron (strain ATCC 29148 / DSM 2079 / JCM 5827 / CCUG 10774 / NCTC 10582 / VPI-5482 / E50).